A 152-amino-acid chain; its full sequence is Acidic phospholipase A2 S17-58 (152 aa).

A signal peptide spans Met-1 to Ala-19. A propeptide spanning residues Ser-20–Leu-27 is cleaved from the precursor. 7 cysteine pairs are disulfide-bonded: Cys-38–Cys-104, Cys-54–Cys-151, Cys-56–Cys-72, Cys-71–Cys-132, Cys-78–Cys-125, Cys-88–Cys-118, and Cys-111–Cys-123. Ca(2+)-binding residues include Tyr-55, Gly-57, and Gly-59. His-75 is an active-site residue. A Ca(2+)-binding site is contributed by Asp-76. Asp-126 is a catalytic residue.

This sequence belongs to the phospholipase A2 family. Group I subfamily. D49 sub-subfamily. Ca(2+) is required as a cofactor. In terms of tissue distribution, expressed by the venom gland.

Its subcellular location is the secreted. The enzyme catalyses a 1,2-diacyl-sn-glycero-3-phosphocholine + H2O = a 1-acyl-sn-glycero-3-phosphocholine + a fatty acid + H(+). In terms of biological role, snake venom phospholipase A2 (PLA2) that inhibits collagen-induced platelet aggregation. PLA2 catalyzes the calcium-dependent hydrolysis of the 2-acyl groups in 3-sn-phosphoglycerides. The protein is Acidic phospholipase A2 S17-58 of Austrelaps superbus (Lowland copperhead snake).